Here is a 213-residue protein sequence, read N- to C-terminus: Large ribosomal subunit protein eL14 (213 aa).

Residue Lys-79 is modified to N6-acetyllysine. Lys-85 carries the post-translational modification N6-acetyllysine; alternate. N6-succinyllysine; alternate is present on Lys-85. Lys-124 participates in a covalent cross-link: Glycyl lysine isopeptide (Lys-Gly) (interchain with G-Cter in SUMO2). Ser-139 is subject to Phosphoserine. Residues 166-213 (TAGKKAPAQKAPAQKAAGQKAAPPPKAQKVQKPPAQKAPAPKASGEKA) form a disordered region. A 1-1; approximate repeat occupies 169-173 (KKAPA). Residues 169 to 188 (KKAPAQKAPAQKAAGQKAAP) are 4 X 5 AA tandem repeats of Q-K-A-[APS]-X. Repeat copies occupy residues 174 to 178 (QKAPA), 179 to 183 (QKAAG), 184 to 188 (QKAAP), 191 to 193 (KAQ), and 194 to 196 (KVQ). The 2 X 3 AA tandem repeats of K-G-Q stretch occupies residues 191–196 (KAQKVQ). N6-succinyllysine is present on Lys-202.

Belongs to the eukaryotic ribosomal protein eL14 family. As to quaternary structure, component of the large ribosomal subunit.

It is found in the cytoplasm. In terms of biological role, component of the large ribosomal subunit. The ribosome is a large ribonucleoprotein complex responsible for the synthesis of proteins in the cell. The sequence is that of Large ribosomal subunit protein eL14 (RPL14) from Sus scrofa (Pig).